The chain runs to 447 residues: Signal recognition particle 54 kDa protein (447 aa).

Residues 103-110, 185-189, and 245-248 each bind GTP; these read GVQGSGKT, DTAGR, and TKMD.

It belongs to the GTP-binding SRP family. SRP54 subfamily. Part of the signal recognition particle protein translocation system, which is composed of SRP and FtsY. Archaeal SRP consists of a 7S RNA molecule of 300 nucleotides and two protein subunits: SRP54 and SRP19.

Its subcellular location is the cytoplasm. The enzyme catalyses GTP + H2O = GDP + phosphate + H(+). Functionally, involved in targeting and insertion of nascent membrane proteins into the cytoplasmic membrane. Binds to the hydrophobic signal sequence of the ribosome-nascent chain (RNC) as it emerges from the ribosomes. The SRP-RNC complex is then targeted to the cytoplasmic membrane where it interacts with the SRP receptor FtsY. In Saccharolobus islandicus (strain L.S.2.15 / Lassen #1) (Sulfolobus islandicus), this protein is Signal recognition particle 54 kDa protein.